Reading from the N-terminus, the 330-residue chain is Homeobox protein Hox-C13 (330 aa).

Gly residues predominate over residues 30–47 (GGGGGGGGGTGGAGGGCS). Residues 30-50 (GGGGGGGGGTGGAGGGCSGAS) are disordered. Residues 260 to 319 (GRKKRVPYTKVQLKELEKEYAASKFITKEKRRRISATTNLSERQVTIWFQNRRVKEKKVV) constitute a DNA-binding region (homeobox).

It belongs to the Abd-B homeobox family.

The protein localises to the nucleus. Transcription factor which plays a role in hair follicle differentiation. Regulates FOXQ1 expression and that of other hair-specific genes. This chain is Homeobox protein Hox-C13 (HOXC13), found in Homo sapiens (Human).